The chain runs to 385 residues: Protein pelota homolog (385 aa).

It belongs to the eukaryotic release factor 1 family. Pelota subfamily. Component of the Pelota-HBS1L complex, also named Dom34-Hbs1 complex, composed of PELO and HBS1L. It depends on a divalent metal cation as a cofactor.

It localises to the cytoplasm. Component of the Pelota-HBS1L complex, a complex that recognizes stalled ribosomes and triggers the No-Go Decay (NGD) pathway. In the Pelota-HBS1L complex, PELO recognizes ribosomes stalled at the 3' end of an mRNA and engages stalled ribosomes by destabilizing mRNA in the mRNA channel. Following mRNA extraction from stalled ribosomes by the SKI complex, the Pelota-HBS1L complex promotes recruitment of ABCE1, which drives the disassembly of stalled ribosomes, followed by degradation of damaged mRNAs as part of the NGD pathway. This Gallus gallus (Chicken) protein is Protein pelota homolog (PELO).